Consider the following 96-residue polypeptide: Phosphoribosyl-ATP pyrophosphatase (96 aa).

This sequence belongs to the PRA-PH family.

The protein localises to the cytoplasm. The enzyme catalyses 1-(5-phospho-beta-D-ribosyl)-ATP + H2O = 1-(5-phospho-beta-D-ribosyl)-5'-AMP + diphosphate + H(+). It functions in the pathway amino-acid biosynthesis; L-histidine biosynthesis; L-histidine from 5-phospho-alpha-D-ribose 1-diphosphate: step 2/9. In Methanococcus aeolicus (strain ATCC BAA-1280 / DSM 17508 / OCM 812 / Nankai-3), this protein is Phosphoribosyl-ATP pyrophosphatase.